The chain runs to 508 residues: MSRFVQDLSKAMSQDGASQFQEVIRQELELSVKKELEKILTTASSHEFEHTKKDLDGFRKLFHRFLQEKGPSVDWGKIQRPPEDSIQPYEKIKARGLPDNISSVLNKLVVVKLNGGLGTSMGCKGPKSLIGVRNENTFLDLTVQQIEHLNKTYNTDVPLVLMNSFNTDEDTKKILQKYNHCRVKIYTFNQSRYPRINKESLLPVAKDVSYSGENTEAWYPPGHGDIYASFYNSGLLDTFIGEGKEYIFVSNIDNLGATVDLYILNHLMNPPNGKRCEFVMEVTNKTRADVKGGTLTQYEGKLRLVEIAQVPKAHVDEFKSVSKFKIFNTNNLWISLAAVKRLQEQNAIDMEIIVNAKTLDGGLNVIQLETAVGAAIKSFENSLGINVPRSRFLPVKTTSDLLLVMSNLYSLNAGSLTMSEKREFPTVPLVKLGSSFTKVQDYLRRFESIPDMLELDHLTVSGDVTFGKNVSLKGTVIIIANHGDRIDIPPGAVLENKIVSGNLRILDH.

Position 2 is an N-acetylserine (S2). Phosphoserine occurs at positions 2 and 13. UTP-binding positions include 113-116 (LNGG), K127, Q190, and G222. 115–116 (GG) contacts substrate. Mg(2+) is bound at residue K127. Residues H223, 251-253 (NID), and N330 each bind substrate. D253 is a UTP binding site. D253 contacts Mg(2+). Residue K396 participates in UTP binding. K396 is an active-site residue. Phosphothreonine is present on T426. S434 bears the Phosphoserine mark. N6-acetyllysine is present on K438. Phosphoserine is present on residues S448 and S461. The oligomerization stretch occupies residues 457–508 (HLTVSGDVTFGKNVSLKGTVIIIANHGDRIDIPPGAVLENKIVSGNLRILDH). Residues 502–503 (NL) are critical for end-to-end subunit interaction.

Belongs to the UDPGP type 1 family. As to quaternary structure, homooctamer. Highly expressed in various brain regions. Expressed in amygdala, anterior cingulate cortex, caudate, cerebellar hemisphere, cerebellum, cortex, frontal cortex, hippocampus, hypothalamus, nucleus accumbens, putamen, spinal cord and substantia nigra. Also widely expressed among other tissues, including liver, heart, placenta, lung, kidney, pancreas and skeletal muscle.

Its subcellular location is the cytoplasm. The enzyme catalyses alpha-D-glucose 1-phosphate + UTP + H(+) = UDP-alpha-D-glucose + diphosphate. It functions in the pathway glycan biosynthesis; glycogen biosynthesis. UTP--glucose-1-phosphate uridylyltransferase catalyzing the conversion of glucose-1-phosphate into UDP-glucose, a crucial precursor for the production of glycogen. The polypeptide is UTP--glucose-1-phosphate uridylyltransferase (Homo sapiens (Human)).